The sequence spans 237 residues: Large ribosomal subunit protein uL1 (237 aa).

This sequence belongs to the universal ribosomal protein uL1 family. As to quaternary structure, part of the 50S ribosomal subunit.

In terms of biological role, binds directly to 23S rRNA. The L1 stalk is quite mobile in the ribosome, and is involved in E site tRNA release. Protein L1 is also a translational repressor protein, it controls the translation of the L11 operon by binding to its mRNA. This chain is Large ribosomal subunit protein uL1, found in Chloroflexus aurantiacus (strain ATCC 29364 / DSM 637 / Y-400-fl).